Here is a 275-residue protein sequence, read N- to C-terminus: NH(3)-dependent NAD(+) synthetase (275 aa).

46–53 (GISGGQDS) is an ATP binding site. D52 provides a ligand contact to Mg(2+). R140 provides a ligand contact to deamido-NAD(+). Residue T160 coordinates ATP. Position 165 (E165) interacts with Mg(2+). Deamido-NAD(+) contacts are provided by K173 and D180. Residues K189 and T211 each coordinate ATP. 260-261 (HK) contributes to the deamido-NAD(+) binding site.

It belongs to the NAD synthetase family. As to quaternary structure, homodimer.

It carries out the reaction deamido-NAD(+) + NH4(+) + ATP = AMP + diphosphate + NAD(+) + H(+). It functions in the pathway cofactor biosynthesis; NAD(+) biosynthesis; NAD(+) from deamido-NAD(+) (ammonia route): step 1/1. In terms of biological role, catalyzes the ATP-dependent amidation of deamido-NAD to form NAD. Uses ammonia as a nitrogen source. The protein is NH(3)-dependent NAD(+) synthetase of Salmonella paratyphi A (strain ATCC 9150 / SARB42).